We begin with the raw amino-acid sequence, 142 residues long: Transcriptional regulator MraZ (142 aa).

SpoVT-AbrB domains are found at residues 5–47 (NYQH…TNQE) and 76–119 (SLTV…DINA).

Belongs to the MraZ family. As to quaternary structure, forms oligomers.

The protein resides in the cytoplasm. It localises to the nucleoid. The sequence is that of Transcriptional regulator MraZ from Mycoplasmoides gallisepticum (strain R(low / passage 15 / clone 2)) (Mycoplasma gallisepticum).